A 176-amino-acid polypeptide reads, in one-letter code: Cystatin-related protein 2 (176 aa).

The N-terminal stretch at 1 to 26 (MYKTLCGTQLLLAIFVLFLNFSHATA) is a signal peptide. Positions 27 to 30 (KGTR) are excised as a propeptide. N-linked (GlcNAc...) asparagine glycosylation is present at Asn-71. Intrachain disulfides connect Cys-129–Cys-139 and Cys-153–Cys-173.

The protein belongs to the cystatin family. Prostate.

This is Cystatin-related protein 2 (Crp2) from Rattus norvegicus (Rat).